Here is a 184-residue protein sequence, read N- to C-terminus: Putative rRNA methyltransferase YlbH (184 aa).

The segment at 1-22 (MRVISGSKKGRSLKAVAGTSTR) is disordered.

It belongs to the methyltransferase superfamily. RsmD family.

Functionally, may catalyze the S-adenosyl-L-methionine-dependent methylation of a specific base in rRNA. The protein is Putative rRNA methyltransferase YlbH (ylbH) of Bacillus subtilis (strain 168).